Here is a 340-residue protein sequence, read N- to C-terminus: 4-hydroxy-3-methylbut-2-enyl diphosphate reductase (340 aa).

A [4Fe-4S] cluster-binding site is contributed by Cys18. (2E)-4-hydroxy-3-methylbut-2-enyl diphosphate contacts are provided by His47 and His83. Residues His47 and His83 each coordinate dimethylallyl diphosphate. Residues His47 and His83 each coordinate isopentenyl diphosphate. Cys105 provides a ligand contact to [4Fe-4S] cluster. Residue His133 participates in (2E)-4-hydroxy-3-methylbut-2-enyl diphosphate binding. His133 serves as a coordination point for dimethylallyl diphosphate. His133 provides a ligand contact to isopentenyl diphosphate. The active-site Proton donor is the Glu135. Residue Thr174 participates in (2E)-4-hydroxy-3-methylbut-2-enyl diphosphate binding. A [4Fe-4S] cluster-binding site is contributed by Cys204. (2E)-4-hydroxy-3-methylbut-2-enyl diphosphate-binding residues include Ser232, Ser233, Asn234, and Ser277. 4 residues coordinate dimethylallyl diphosphate: Ser232, Ser233, Asn234, and Ser277. The isopentenyl diphosphate site is built by Ser232, Ser233, Asn234, and Ser277.

It belongs to the IspH family. [4Fe-4S] cluster is required as a cofactor.

The catalysed reaction is isopentenyl diphosphate + 2 oxidized [2Fe-2S]-[ferredoxin] + H2O = (2E)-4-hydroxy-3-methylbut-2-enyl diphosphate + 2 reduced [2Fe-2S]-[ferredoxin] + 2 H(+). It carries out the reaction dimethylallyl diphosphate + 2 oxidized [2Fe-2S]-[ferredoxin] + H2O = (2E)-4-hydroxy-3-methylbut-2-enyl diphosphate + 2 reduced [2Fe-2S]-[ferredoxin] + 2 H(+). The protein operates within isoprenoid biosynthesis; dimethylallyl diphosphate biosynthesis; dimethylallyl diphosphate from (2E)-4-hydroxy-3-methylbutenyl diphosphate: step 1/1. It participates in isoprenoid biosynthesis; isopentenyl diphosphate biosynthesis via DXP pathway; isopentenyl diphosphate from 1-deoxy-D-xylulose 5-phosphate: step 6/6. In terms of biological role, catalyzes the conversion of 1-hydroxy-2-methyl-2-(E)-butenyl 4-diphosphate (HMBPP) into a mixture of isopentenyl diphosphate (IPP) and dimethylallyl diphosphate (DMAPP). Acts in the terminal step of the DOXP/MEP pathway for isoprenoid precursor biosynthesis. The chain is 4-hydroxy-3-methylbut-2-enyl diphosphate reductase from Bartonella quintana (strain Toulouse) (Rochalimaea quintana).